The chain runs to 105 residues: Large ribosomal subunit protein uL24 (105 aa).

It belongs to the universal ribosomal protein uL24 family. As to quaternary structure, part of the 50S ribosomal subunit.

In terms of biological role, one of two assembly initiator proteins, it binds directly to the 5'-end of the 23S rRNA, where it nucleates assembly of the 50S subunit. One of the proteins that surrounds the polypeptide exit tunnel on the outside of the subunit. The sequence is that of Large ribosomal subunit protein uL24 from Thioalkalivibrio sulfidiphilus (strain HL-EbGR7).